We begin with the raw amino-acid sequence, 376 residues long: 26S proteasome non-ATPase regulatory subunit 13 (376 aa).

One can recognise a PCI domain in the interval 171-338; it reads SYYKDALRFL…KRVHMTWVQP (168 aa). At K298 the chain carries N6-acetyllysine.

Belongs to the proteasome subunit S11 family. Component of the 19S proteasome regulatory particle complex. The 26S proteasome consists of a 20S core particle (CP) and two 19S regulatory subunits (RP). The regulatory particle is made of a lid composed of 9 subunits including PSMD13, a base containing 6 ATPases and few additional components.

Functionally, component of the 26S proteasome, a multiprotein complex involved in the ATP-dependent degradation of ubiquitinated proteins. This complex plays a key role in the maintenance of protein homeostasis by removing misfolded or damaged proteins, which could impair cellular functions, and by removing proteins whose functions are no longer required. Therefore, the proteasome participates in numerous cellular processes, including cell cycle progression, apoptosis, or DNA damage repair. The polypeptide is 26S proteasome non-ATPase regulatory subunit 13 (Rattus norvegicus (Rat)).